Here is a 150-residue protein sequence, read N- to C-terminus: Large ribosomal subunit protein bL9 (150 aa).

It belongs to the bacterial ribosomal protein bL9 family.

In terms of biological role, binds to the 23S rRNA. This chain is Large ribosomal subunit protein bL9, found in Enterococcus faecalis (strain ATCC 700802 / V583).